A 414-amino-acid polypeptide reads, in one-letter code: Sex comb on midleg-like protein 4 (414 aa).

Phosphoserine is present on residues serine 55 and serine 65. Residues 257–276 (HRGSLHPSSSLYCKRQNSGD) show a composition bias toward polar residues. The disordered stretch occupies residues 257–343 (HRGSLHPSSS…DARRPRSRNP (87 aa)). A compositionally biased stretch (low complexity) spans 284–304 (AATAGGPRTSPMSSGGPSAPG). Residues 288-354 (GGPRTSPMSS…AWTVEDVVWF (67 aa)) form the SAM domain. Positions 312–332 (PKRNTTSLEGNRCASSPSQDA) are enriched in polar residues.

This sequence belongs to the SCM family.

The protein resides in the nucleus. Putative Polycomb group (PcG) protein. PcG proteins act by forming multiprotein complexes, which are required to maintain the transcriptionally repressive state of homeotic genes throughout development. The protein is Sex comb on midleg-like protein 4 (SCML4) of Homo sapiens (Human).